A 197-amino-acid chain; its full sequence is Dephospho-CoA kinase (197 aa).

Residues 2–197 (RIGLTGGIAS…YDALAKTAHE (196 aa)) enclose the DPCK domain. 10–15 (ASGKSL) contacts ATP.

Belongs to the CoaE family.

The protein localises to the cytoplasm. It catalyses the reaction 3'-dephospho-CoA + ATP = ADP + CoA + H(+). It participates in cofactor biosynthesis; coenzyme A biosynthesis; CoA from (R)-pantothenate: step 5/5. Catalyzes the phosphorylation of the 3'-hydroxyl group of dephosphocoenzyme A to form coenzyme A. The protein is Dephospho-CoA kinase of Shouchella clausii (strain KSM-K16) (Alkalihalobacillus clausii).